Consider the following 469-residue polypeptide: Flap endonuclease 1-B (469 aa).

The segment at 1 to 103 is N-domain; sequence MGIKGLTGLL…GVLSKRLERR (103 aa). Asp-32 contributes to the Mg(2+) binding site. DNA contacts are provided by Arg-45 and Arg-69. Asp-85, Glu-157, Glu-159, Asp-183, and Asp-185 together coordinate Mg(2+). The I-domain stretch occupies residues 121–257; the sequence is DVDRFSRRTV…KSALKLIREY (137 aa). DNA is bound at residue Glu-157. Positions 235 and 237 each coordinate DNA. Asp-237 is a binding site for Mg(2+). The tract at residues 274 to 354 is disordered; the sequence is QKAAQAAVES…GGMQIPEEWP (81 aa). 2 stretches are compositionally biased toward acidic residues: residues 282-295 and 302-317; these read ESDEESEHEEEDEP and EMPDPVEEDQDGEEEA. Over residues 326-342 the composition is skewed to basic residues; that stretch reads PKKKKASSKTKEKRKGK. The tract at residues 412 to 420 is interaction with PCNA; the sequence is QQGRLDGFF. Residues 424–469 form a disordered region; it reads PKEKAAAPAPVGKAKGKGKIDAKAKGTKRKVDEKAESSAGKKPRKK. Positions 441–459 are enriched in basic and acidic residues; the sequence is GKIDAKAKGTKRKVDEKAE.

The protein belongs to the XPG/RAD2 endonuclease family. FEN1 subfamily. As to quaternary structure, interacts with PCNA. Three molecules of FEN1 bind to one PCNA trimer with each molecule binding to one PCNA monomer. PCNA stimulates the nuclease activity without altering cleavage specificity. Mg(2+) serves as cofactor. Phosphorylated. Phosphorylation upon DNA damage induces relocalization to the nuclear plasma.

The protein resides in the nucleus. It localises to the nucleolus. The protein localises to the nucleoplasm. Its subcellular location is the mitochondrion. In terms of biological role, structure-specific nuclease with 5'-flap endonuclease and 5'-3' exonuclease activities involved in DNA replication and repair. During DNA replication, cleaves the 5'-overhanging flap structure that is generated by displacement synthesis when DNA polymerase encounters the 5'-end of a downstream Okazaki fragment. It enters the flap from the 5'-end and then tracks to cleave the flap base, leaving a nick for ligation. Also involved in the long patch base excision repair (LP-BER) pathway, by cleaving within the apurinic/apyrimidinic (AP) site-terminated flap. Acts as a genome stabilization factor that prevents flaps from equilibrating into structures that lead to duplications and deletions. Also possesses 5'-3' exonuclease activity on nicked or gapped double-stranded DNA, and exhibits RNase H activity. Also involved in replication and repair of rDNA and in repairing mitochondrial DNA. This Laccaria bicolor (strain S238N-H82 / ATCC MYA-4686) (Bicoloured deceiver) protein is Flap endonuclease 1-B.